We begin with the raw amino-acid sequence, 4639 residues long: Dynein heavy chain, cytoplasmic (4639 aa).

Positions 1-1856 (MGDSLENPDT…TIHMANARFF (1856 aa)) are stem. Coiled coils occupy residues 530-565 (LDITKEGSEAWEAAVKRYEEKIDRVETRITAHLRDQ), 774-794 (SLIESVRTYERTLEKIEDRAS), and 1264-1368 (DDAL…ARLR). 4 AAA regions span residues 1857-2084 (YGFE…VLIS), 2166-2437 (EEIR…FTRL), 2541-2790 (EVET…WVRG), and 2884-3153 (VFYE…GGRT). Residues 1895 to 1902 (GPAGTGKT), 2210 to 2217 (GPSGSGKS), 2580 to 2587 (GPPGSGKT), and 2922 to 2929 (GVSGAGKT) each bind ATP. Coiled-coil stretches lie at residues 3189 to 3261 (GLNK…EKRK), 3382 to 3478 (AIAQ…WEST), and 3723 to 3782 (EFRL…EIET). A stalk region spans residues 3189–3478 (GLNKIAETVE…NIERERWEST (290 aa)). AAA stretches follow at residues 3539-3768 (LSNP…DINQ) and 3989-4205 (AHNV…TLDT).

Belongs to the dynein heavy chain family. Consists of at least two heavy chains and a number of intermediate and light chains.

The protein resides in the cytoplasm. Its subcellular location is the cytoskeleton. Functionally, cytoplasmic dynein acts as a motor for the intracellular retrograde motility of vesicles and organelles along microtubules. Dynein has ATPase activity; the force-producing power stroke is thought to occur on release of ADP. In Drosophila melanogaster (Fruit fly), this protein is Dynein heavy chain, cytoplasmic (Dhc64C).